A 329-amino-acid chain; its full sequence is Biotin synthase (329 aa).

A Radical SAM core domain is found at 38–262; that stretch reads NTIQVSTLLS…IMPYSYIRLS (225 aa). [4Fe-4S] cluster contacts are provided by cysteine 53, cysteine 57, and cysteine 60. The [2Fe-2S] cluster site is built by cysteine 97, cysteine 128, cysteine 188, and arginine 260.

The protein belongs to the radical SAM superfamily. Biotin synthase family. As to quaternary structure, homodimer. [4Fe-4S] cluster serves as cofactor. [2Fe-2S] cluster is required as a cofactor.

The enzyme catalyses (4R,5S)-dethiobiotin + (sulfur carrier)-SH + 2 reduced [2Fe-2S]-[ferredoxin] + 2 S-adenosyl-L-methionine = (sulfur carrier)-H + biotin + 2 5'-deoxyadenosine + 2 L-methionine + 2 oxidized [2Fe-2S]-[ferredoxin]. It functions in the pathway cofactor biosynthesis; biotin biosynthesis; biotin from 7,8-diaminononanoate: step 2/2. Functionally, catalyzes the conversion of dethiobiotin (DTB) to biotin by the insertion of a sulfur atom into dethiobiotin via a radical-based mechanism. The polypeptide is Biotin synthase (Acinetobacter baylyi (strain ATCC 33305 / BD413 / ADP1)).